A 195-amino-acid polypeptide reads, in one-letter code: Thymidine kinase (195 aa).

ATP contacts are provided by residues 15 to 22 (GSMFSGKS) and 88 to 91 (DEVQ). The Proton acceptor role is filled by Glu89. Residues Cys145, Cys148, Cys183, and Cys186 each contribute to the Zn(2+) site.

This sequence belongs to the thymidine kinase family. Homotetramer.

Its subcellular location is the cytoplasm. It catalyses the reaction thymidine + ATP = dTMP + ADP + H(+). The protein is Thymidine kinase of Bacillus cereus (strain AH187).